A 463-amino-acid polypeptide reads, in one-letter code: Dipeptidyl peptidase 1 (463 aa).

A signal peptide spans 1 to 24 (MGPWSGSRLVALLLLVYGAGSVRG). 2 N-linked (GlcNAc...) asparagine glycosylation sites follow: Asn-29 and Asn-53. Cystine bridges form between Cys-30/Cys-118 and Cys-54/Cys-136. Positions 135-230 (ACFTGRKTGN…TAEIQKKILH (96 aa)) are excised as a propeptide. Residue Asn-144 is glycosylated (N-linked (GlcNAc...) asparagine). 3 disulfide bridges follow: Cys-255–Cys-298, Cys-291–Cys-331, and Cys-321–Cys-337. The active site involves Cys-258. Residue Asn-276 is glycosylated (N-linked (GlcNAc...) asparagine). Positions 302 and 304 each coordinate chloride. Tyr-347 contacts chloride. Residues His-405 and Asn-427 contribute to the active site.

Belongs to the peptidase C1 family. As to quaternary structure, tetramer of heterotrimers consisting of exclusion domain, heavy- and light chains. It depends on chloride as a cofactor.

It is found in the lysosome. It carries out the reaction Release of an N-terminal dipeptide, Xaa-Yaa-|-Zaa-, except when Xaa is Arg or Lys, or Yaa or Zaa is Pro.. In terms of biological role, thiol protease. Has dipeptidylpeptidase activity. Active against a broad range of dipeptide substrates composed of both polar and hydrophobic amino acids. Proline cannot occupy the P1 position and arginine cannot occupy the P2 position of the substrate. Can act as both an exopeptidase and endopeptidase. Activates serine proteases such as elastase, cathepsin G and granzymes A and B. The protein is Dipeptidyl peptidase 1 (CTSC) of Bos taurus (Bovine).